The following is a 423-amino-acid chain: Tegument protein UL43 (423 aa).

Residues 1–12 (MEKTPAETTAVS) show a composition bias toward polar residues. Positions 1–46 (MEKTPAETTAVSAGNVPRDSIPCITNVSADTRGRTRPSRPATVPQR) are disordered.

It belongs to the herpesviridae US22 family.

It is found in the virion tegument. The protein is Tegument protein UL43 (UL43) of Homo sapiens (Human).